The chain runs to 366 residues: Putative RING-H2 finger protein ATL21C (366 aa).

A signal peptide spans M1–A23. A helical transmembrane segment spans residues L243–I263. The segment at C320–R362 adopts an RING-type; atypical zinc-finger fold.

It belongs to the RING-type zinc finger family. ATL subfamily.

The protein localises to the membrane. The enzyme catalyses S-ubiquitinyl-[E2 ubiquitin-conjugating enzyme]-L-cysteine + [acceptor protein]-L-lysine = [E2 ubiquitin-conjugating enzyme]-L-cysteine + N(6)-ubiquitinyl-[acceptor protein]-L-lysine.. Its pathway is protein modification; protein ubiquitination. The polypeptide is Putative RING-H2 finger protein ATL21C (ATL21C) (Arabidopsis thaliana (Mouse-ear cress)).